We begin with the raw amino-acid sequence, 345 residues long: Fe-S cluster assembly protein DRE2 (345 aa).

The interval 11–166 (FSHSSNGVVL…SIGSSSGSSS (156 aa)) is N-terminal SAM-like domain. The interval 147–166 (SKPATASSSFSIGSSSGSSS) is disordered. A compositionally biased stretch (low complexity) spans 153-166 (SSSFSIGSSSGSSS). A linker region spans residues 167–210 (ALPLRRKLGSGASANAKKSLWATQPASANDLIDEASLLRDADFV). Residues cysteine 220, cysteine 233, cysteine 236, and cysteine 238 each contribute to the [2Fe-2S] cluster site. The fe-S binding site A stretch occupies residues 220–238 (CDVGAGQGKKKKACKGCTC). Residues cysteine 307, cysteine 310, cysteine 318, and cysteine 321 each contribute to the [4Fe-4S] cluster site. Short sequence motifs (cx2C motif) lie at residues 307 to 310 (CGSC) and 318 to 321 (CSSC). The interval 307 to 321 (CGSCFLGDAFRCSSC) is fe-S binding site B.

It belongs to the anamorsin family. Monomer. Interacts with TAH18. Interacts with MIA40. [2Fe-2S] cluster is required as a cofactor. It depends on [4Fe-4S] cluster as a cofactor.

It is found in the cytoplasm. The protein localises to the mitochondrion intermembrane space. Its function is as follows. Component of the cytosolic iron-sulfur (Fe-S) protein assembly (CIA) machinery required for the maturation of extramitochondrial Fe-S proteins. Part of an electron transfer chain functioning in an early step of cytosolic Fe-S biogenesis, facilitating the de novo assembly of a [4Fe-4S] cluster on the scaffold complex CFD1-NBP35. Electrons are transferred to DRE2 from NADPH via the FAD- and FMN-containing protein TAH18. TAH18-DRE2 are also required for the assembly of the diferric tyrosyl radical cofactor of ribonucleotide reductase (RNR), probably by providing electrons for reduction during radical cofactor maturation in the catalytic small subunit RNR2. The sequence is that of Fe-S cluster assembly protein DRE2 from Mycosarcoma maydis (Corn smut fungus).